The chain runs to 449 residues: MAKKAVFKSLYFQVLVAIAIGVSLGHFYPETGAAMKPLGDGFIKLIKMIIAPIIFCTIVVGIAGMEDMKKVGKTGGLAVLYFEVVSTIALVIGLIVVNVWAPGVGMNVDVSTLDTKGIAKYAQPGQMQTTTDFLMNIIPTSVVDAFAKGDMLQVLFFSILFGYAMHSFGERGKPVFELIEKLSHVLFGIVGVIMKVAPIGAFGAMAYTIGKHGVGSLAQLASLMGAFYLTCVIFILGVLGSIAAFHGFSIIKLIKYIKEELFLVLGTSSSESALPRLMAKMENAGAQKSVVGLVVPTGYSFNLDGTSIYLTMAAVFIAQATNTPLDLQHQVTLLVILLLTSKGAAGVTGSGFIVLAATLSAVGTVPVAGLALILGIDRFMSEARALTNFIGNSVATLVVAKWCNALDAKRMNAVLNNETSDEAENPELVLDDAPDVIIPHVPRPIIDHH.

The next 9 membrane-spanning stretches (helical) occupy residues 5–25 (AVFK…VSLG), 45–65 (LIKM…IAGM), 77–97 (LAVL…LIVV), 149–169 (GDML…HSFG), 185–205 (VLFG…FGAM), 231–251 (CVIF…FSII), 298–318 (GYSF…VFIA), 332–352 (TLLV…GSGF), and 353–373 (IVLA…LALI).

This sequence belongs to the dicarboxylate/amino acid:cation symporter (DAACS) (TC 2.A.23) family.

It localises to the cell inner membrane. Its function is as follows. Responsible for the transport of dicarboxylates such as succinate, fumarate, and malate from the periplasm across the membrane. This chain is C4-dicarboxylate transport protein, found in Dechloromonas aromatica (strain RCB).